A 999-amino-acid chain; its full sequence is Protein Smaug (999 aa).

Residues M1–P36 show a composition bias toward polar residues. 2 disordered regions span residues M1–P69 and L329–P349. Composition is skewed to low complexity over residues T44–P69 and L329–S338. S564 and S575 each carry phosphoserine. The tract at residues E583–M763 is interaction with cup. One can recognise an SAM domain in the interval G600–K654. 2 disordered regions span residues H773 to M892 and Q955 to P977. Polar residues-rich tracts occupy residues K801 to L822 and H854 to P864. S972 carries the phosphoserine modification.

The protein belongs to the SMAUG family. In terms of assembly, interacts with oskar (osk). Binds to the 3'-UTR of nanos (nos). Interacts with cup, which in turn recruits eIF4-E, leading to an indirect interaction between smg and eIF4-E that prevents mRNA translation. Forms a complex with aub, twin, AGO3, nanos mRNA and piRNAs that targets the nanos 3'-untranslated region, in early embryos. As to expression, at syncytial blastoderm, it is located throughout the bulk cytoplasm and pole plasm. By the time of cellularization, it concentrates at the posterior pole.

The protein localises to the cytoplasm. Its function is as follows. Translation regulator that binds to the 3'-UTR of specific mRNAs such as nanos (nos) and prevents their translation. Prevents translation of unlocalized nanos in the bulk cytoplasm via the recruitment of cup. In Drosophila melanogaster (Fruit fly), this protein is Protein Smaug (smg).